The primary structure comprises 536 residues: Phosphoenolpyruvate carboxykinase (ATP) (536 aa).

3 residues coordinate substrate: arginine 61, tyrosine 195, and lysine 201. Residues lysine 201, histidine 220, and 236-244 contribute to the ATP site; that span reads GLSGTGKTT. Mn(2+)-binding residues include lysine 201 and histidine 220. Residue aspartate 257 coordinates Mn(2+). Glutamate 285, arginine 323, and threonine 448 together coordinate ATP. Arginine 323 is a binding site for substrate.

This sequence belongs to the phosphoenolpyruvate carboxykinase (ATP) family. Mn(2+) serves as cofactor.

Its subcellular location is the cytoplasm. The enzyme catalyses oxaloacetate + ATP = phosphoenolpyruvate + ADP + CO2. It functions in the pathway carbohydrate biosynthesis; gluconeogenesis. In terms of biological role, involved in the gluconeogenesis. Catalyzes the conversion of oxaloacetate (OAA) to phosphoenolpyruvate (PEP) through direct phosphoryl transfer between the nucleoside triphosphate and OAA. The polypeptide is Phosphoenolpyruvate carboxykinase (ATP) (Methylobacterium sp. (strain 4-46)).